Reading from the N-terminus, the 108-residue chain is Insertion element IS629 uncharacterized 12 kDa protein S4062 (108 aa).

This sequence belongs to the transposase 8 family.

The polypeptide is Insertion element IS629 uncharacterized 12 kDa protein S4062 (Shigella flexneri).